A 523-amino-acid polypeptide reads, in one-letter code: 2-isopropylmalate synthase (523 aa).

The 263-residue stretch at 5 to 267 (VIIFDTTLRD…HTAINHQEIW (263 aa)) folds into the Pyruvate carboxyltransferase domain. Mn(2+)-binding residues include Asp-14, His-202, His-204, and Asn-238. The interval 392 to 523 (RLDYFSVQSG…QHNENNKETV (132 aa)) is regulatory domain.

This sequence belongs to the alpha-IPM synthase/homocitrate synthase family. LeuA type 1 subfamily. As to quaternary structure, homodimer. Mn(2+) serves as cofactor.

Its subcellular location is the cytoplasm. It catalyses the reaction 3-methyl-2-oxobutanoate + acetyl-CoA + H2O = (2S)-2-isopropylmalate + CoA + H(+). It participates in amino-acid biosynthesis; L-leucine biosynthesis; L-leucine from 3-methyl-2-oxobutanoate: step 1/4. Functionally, catalyzes the condensation of the acetyl group of acetyl-CoA with 3-methyl-2-oxobutanoate (2-ketoisovalerate) to form 3-carboxy-3-hydroxy-4-methylpentanoate (2-isopropylmalate). The chain is 2-isopropylmalate synthase from Escherichia coli O45:K1 (strain S88 / ExPEC).